Consider the following 316-residue polypeptide: Acetyl-coenzyme A carboxylase carboxyl transferase subunit alpha (316 aa).

The CoA carboxyltransferase C-terminal domain maps to Arg39 to Met293.

It belongs to the AccA family. As to quaternary structure, acetyl-CoA carboxylase is a heterohexamer composed of biotin carboxyl carrier protein (AccB), biotin carboxylase (AccC) and two subunits each of ACCase subunit alpha (AccA) and ACCase subunit beta (AccD).

Its subcellular location is the cytoplasm. It carries out the reaction N(6)-carboxybiotinyl-L-lysyl-[protein] + acetyl-CoA = N(6)-biotinyl-L-lysyl-[protein] + malonyl-CoA. Its pathway is lipid metabolism; malonyl-CoA biosynthesis; malonyl-CoA from acetyl-CoA: step 1/1. Its function is as follows. Component of the acetyl coenzyme A carboxylase (ACC) complex. First, biotin carboxylase catalyzes the carboxylation of biotin on its carrier protein (BCCP) and then the CO(2) group is transferred by the carboxyltransferase to acetyl-CoA to form malonyl-CoA. The chain is Acetyl-coenzyme A carboxylase carboxyl transferase subunit alpha from Stutzerimonas stutzeri (strain A1501) (Pseudomonas stutzeri).